Consider the following 311-residue polypeptide: Dehydrogenase/reductase SDR family member 7C (311 aa).

Positions 1–18 (MGIMAVLMLPLLLLGVSG) are cleaved as a signal peptide. The NAD(+) site is built by Ser47, Leu49, Tyr191, Lys195, and Ser226. The Proton acceptor role is filled by Tyr191.

Belongs to the short-chain dehydrogenases/reductases (SDR) family. Expressed in skeletal muscle, cardiac muscle and skin.

It localises to the sarcoplasmic reticulum membrane. It catalyses the reaction all-trans-retinol + NAD(+) = all-trans-retinal + NADH + H(+). Its function is as follows. NADH-dependent oxidoreductase which catalyzes the oxidation of all-trans-retinol to all-trans-retinal. Plays a role in the regulation of cardiac and skeletal muscle metabolic functions. Maintains Ca(2+) intracellular homeostasis by repressing Ca(2+) release from the sarcoplasmic reticulum (SR) in myotubes, possibly through local alternations in NAD/NADH or retinol/retinal. Also plays a role in Ca(2+) homeostasis by controlling Ca(2+) overload in the cytosol and the SR in myotubes. Involved in glucose uptake into skeletal muscles and muscle performance by activating PI3K and mTORC2-mediated AKT1 phosphorylation signaling pathways, possibly through the action of its downstream catalytic product all-trans-retinoic acid. This chain is Dehydrogenase/reductase SDR family member 7C, found in Rattus norvegicus (Rat).